The sequence spans 114 residues: Large ribosomal subunit protein bL20c (114 aa).

It belongs to the bacterial ribosomal protein bL20 family.

The protein localises to the plastid. It is found in the chloroplast. In terms of biological role, binds directly to 23S ribosomal RNA and is necessary for the in vitro assembly process of the 50S ribosomal subunit. It is not involved in the protein synthesizing functions of that subunit. In Tetradesmus obliquus (Green alga), this protein is Large ribosomal subunit protein bL20c.